The sequence spans 197 residues: Elongation factor Ts (197 aa).

The interval 81–84 (TDFV) is involved in Mg(2+) ion dislocation from EF-Tu.

Belongs to the EF-Ts family.

The protein localises to the cytoplasm. Functionally, associates with the EF-Tu.GDP complex and induces the exchange of GDP to GTP. It remains bound to the aminoacyl-tRNA.EF-Tu.GTP complex up to the GTP hydrolysis stage on the ribosome. The polypeptide is Elongation factor Ts (Thermotoga neapolitana (strain ATCC 49049 / DSM 4359 / NBRC 107923 / NS-E)).